The chain runs to 112 residues: UPF0235 protein Atu2660 (112 aa).

It belongs to the UPF0235 family.

The protein is UPF0235 protein Atu2660 of Agrobacterium fabrum (strain C58 / ATCC 33970) (Agrobacterium tumefaciens (strain C58)).